The following is a 364-amino-acid chain: MGVTGILQLPRDRFKRTSFFLWVIILFQRTFSIPLGVIHNSTLQVNDVDKLVCRDKLSSTNQLRSVGLNLEGNGVATDVPSATKRWGFRSGVPPKVVNYEAGEWAENCYNLEIKKPDGSECLPAAPDGIRGFPRCRYVHKVSGTGPCAGDFAFHKEGAFFLYDRLASTVIYRGTTFAEGVVAFLILPQAKKDFFSSHPLREPVNATEDPSSGYYSTTIRYQATGFGTNETEYLFEVDNLTYVQLESRFTPQFLLQLNETIYTSGKRSNTTGKLIWKVNPEIDTTIGEWAFWETKKTSLEKFAVKSCLSQLYQTEPKTSVVRVRRELLPTQGPTQQLKTTKSWLQKIPLQWFKCTVKEGKLQCRI.

Residues 1 to 32 (MGVTGILQLPRDRFKRTSFFLWVIILFQRTFS) form the signal peptide. Asparagine 40 carries N-linked (GlcNAc...) asparagine; by host glycosylation. 2 cysteine pairs are disulfide-bonded: cysteine 108/cysteine 135 and cysteine 121/cysteine 147. Asparagine 204, asparagine 228, asparagine 238, asparagine 257, and asparagine 268 each carry an N-linked (GlcNAc...) asparagine; by host glycan.

Belongs to the filoviruses glycoprotein family. As to quaternary structure, homodimer; disulfide-linked. The homodimers are linked by two disulfide bonds in a parallel orientation. In terms of assembly, monomer. This precursor is processed into mature sGP and delta-peptide by host furin or furin-like proteases. The cleavage site corresponds to the furin optimal cleavage sequence [KR]-X-[KR]-R. In terms of processing, N-glycosylated. Post-translationally, O-glycosylated.

It localises to the secreted. Its function is as follows. Seems to possess an anti-inflammatory activity as it can reverse the barrier-decreasing effects of TNF alpha. Might therefore contribute to the lack of inflammatory reaction seen during infection in spite the of extensive necrosis and massive virus production. Does not seem to be involved in activation of primary macrophages. Does not seem to interact specifically with neutrophils. In terms of biological role, viroporin that permeabilizes mammalian cell plasma membranes. It acts by altering permeation of ionic compounds and small molecules. This activity may lead to viral enterotoxic activity. The chain is Pre-small/secreted glycoprotein (GP) from Zaire ebolavirus (strain Eckron-76) (ZEBOV).